Consider the following 117-residue polypeptide: MEIDVKSPDLIINTIRGNEKIYFDKSIFEESLDNKFEIIQYLMKILERFLKIYDNHIKEIKLLIDSENHPEPHLIVVIKFKNKENIFKISEQIENKIYENPKSKNVLVYPITGGTDV.

This is an uncharacterized protein from Methanocaldococcus jannaschii (strain ATCC 43067 / DSM 2661 / JAL-1 / JCM 10045 / NBRC 100440) (Methanococcus jannaschii).